Consider the following 398-residue polypeptide: AT-rich interactive domain-containing protein 6 (398 aa).

The segment at 25-87 is disordered; that stretch reads EPLEPENDHN…PKTEGENAKK (63 aa). Residues 106-197 form the ARID domain; it reads PVEQVAFLRE…ALLEYEKCLR (92 aa). The disordered stretch occupies residues 213-236; sequence SSVEKEPSSHQGSGSGRARRDSAA. In terms of domain architecture, sHSP spans 305–398; sequence VGPVADWVKI…RLFIRVPFEQ (94 aa).

Belongs to the small heat shock protein (HSP20) family.

The protein localises to the nucleus. This Arabidopsis thaliana (Mouse-ear cress) protein is AT-rich interactive domain-containing protein 6 (ARID6).